Consider the following 347-residue polypeptide: MSSTDDRRFEVLRAIVADYVSTQDPVGSKALVERHNLGVSSATVRNDMAFLEAEGYIAQPHTSSGRVPTDKGYREFVDRIADVKPMSGPERRAILEFLESGVDLDDVLRRGVRLLAQLTRQVAVVQYPSLSASSVRHLEVVALTPARLLLVLITDSGRVDQRIVELGDVLEDEDLSRLRALLGGALEGKRLAAASIAVAELADESPADLRDAVIRSATVLVETLVEHPEDRLVLGGTSNLTRNAADFSGLAGFPGSLRAVLEALEEQVVVLKLLAATQNSGTVTVQIGEETQVEQMRGTSVISTGYGAAGTVFGGVGVLGPTRMDYPGTIASVAAVARYIGEVLSER.

This sequence belongs to the HrcA family.

Its function is as follows. Negative regulator of class I heat shock genes (grpE-dnaK-dnaJ and groELS operons). Prevents heat-shock induction of these operons. This Rhodococcus erythropolis (strain PR4 / NBRC 100887) protein is Heat-inducible transcription repressor HrcA.